Reading from the N-terminus, the 39-residue chain is Photosystem II reaction center protein J (39 aa).

The helical transmembrane segment at 9–29 (LWLVATVGGIAVITVLGIFIY) threads the bilayer.

Belongs to the PsbJ family. In terms of assembly, PSII is composed of 1 copy each of membrane proteins PsbA, PsbB, PsbC, PsbD, PsbE, PsbF, PsbH, PsbI, PsbJ, PsbK, PsbL, PsbM, PsbT, PsbX, PsbY, PsbZ, Psb30/Ycf12, at least 3 peripheral proteins of the oxygen-evolving complex and a large number of cofactors. It forms dimeric complexes.

Its subcellular location is the plastid. It localises to the chloroplast thylakoid membrane. In terms of biological role, one of the components of the core complex of photosystem II (PSII). PSII is a light-driven water:plastoquinone oxidoreductase that uses light energy to abstract electrons from H(2)O, generating O(2) and a proton gradient subsequently used for ATP formation. It consists of a core antenna complex that captures photons, and an electron transfer chain that converts photonic excitation into a charge separation. The protein is Photosystem II reaction center protein J of Gracilaria tenuistipitata var. liui (Red alga).